The primary structure comprises 1187 residues: uncharacterized protein (1187 aa).

Disordered stretches follow at residues 302–405, 419–451, 511–551, 1095–1134, and 1148–1187; these read QKSQ…KPVG, QAFS…RASK, KAPG…LRLE, KSQR…KLPD, and PHLP…PASL. A compositionally biased stretch (low complexity) spans 321-333; sequence LPLSGPAGAPPLG. The segment covering 352 to 361 has biased composition (basic residues); the sequence is SRRKARHKAS. 2 stretches are compositionally biased toward low complexity: residues 422-435 and 517-534; these read SPLL…SPAA and GTTL…GEPP. Polar residues predominate over residues 1096–1107; it reads SQRTPQGEQSRN. Positions 1160–1174 are enriched in low complexity; that stretch reads TGGSFSSEGTGSQTS.

This is an uncharacterized protein from Mus musculus (Mouse).